Reading from the N-terminus, the 82-residue chain is MVDLFFNDTAWYIGQILVLVLFCLISLIFVVAFLATIKLCMQLCGFCNFFIISPSAYVYKRGMQLYKSYSEQVIPPTSDYLI.

Topologically, residues 1-16 (MVDLFFNDTAWYIGQI) are virion surface. A helical membrane pass occupies residues 17 to 37 (LVLVLFCLISLIFVVAFLATI). Topologically, residues 38-79 (KLCMQLCGFCNFFIISPSAYVYKRGMQLYKSYSEQVIPPTSD) are intravirion.

Belongs to the betacoronaviruses E protein family. In terms of assembly, homopentamer. Interacts with membrane protein M in the budding compartment of the host cell, which is located between endoplasmic reticulum and the Golgi complex. Interacts with Nucleoprotein.

It localises to the host Golgi apparatus membrane. Its function is as follows. Plays a central role in virus morphogenesis and assembly. Acts as a viroporin and self-assembles in host membranes forming pentameric protein-lipid pores that allow ion transport. Also plays a role in the induction of apoptosis. The sequence is that of Envelope small membrane protein from Human coronavirus HKU1 (isolate N1) (HCoV-HKU1).